The primary structure comprises 712 residues: Ribosome-releasing factor 2, mitochondrial (712 aa).

The N-terminal 29 residues, 1-29, are a transit peptide targeting the mitochondrion; it reads MLRCAWQNGPRQSNRWLRHLSNQIWKRSY. In terms of domain architecture, tr-type G spans 31-310; that stretch reads SKIRNIGILA…AVNSYLPAPE (280 aa). Residues 40–47, 104–108, and 158–161 contribute to the GTP site; these read AHIDAGKT, DTPGH, and NKMD.

This sequence belongs to the TRAFAC class translation factor GTPase superfamily. Classic translation factor GTPase family. EF-G/EF-2 subfamily.

The protein resides in the mitochondrion. Functionally, mitochondrial GTPase that mediates the disassembly of ribosomes from messenger RNA at the termination of mitochondrial protein biosynthesis. Not involved in the GTP-dependent ribosomal translocation step during translation elongation. The polypeptide is Ribosome-releasing factor 2, mitochondrial (Drosophila yakuba (Fruit fly)).